A 59-amino-acid polypeptide reads, in one-letter code: Large ribosomal subunit protein uL30 (59 aa).

The protein belongs to the universal ribosomal protein uL30 family. In terms of assembly, part of the 50S ribosomal subunit.

This is Large ribosomal subunit protein uL30 from Alkaliphilus metalliredigens (strain QYMF).